The primary structure comprises 297 residues: Tyrosine recombinase XerD (297 aa).

Residues 1–86 (MKDSALIELF…AMRKLFQYLY (86 aa)) enclose the Core-binding (CB) domain. Residues 107–291 (RLPKYLTEQQ…AKERLKHLHE (185 aa)) enclose the Tyr recombinase domain. Catalysis depends on residues arginine 147, lysine 171, histidine 243, arginine 246, and histidine 269. Tyrosine 278 functions as the O-(3'-phospho-DNA)-tyrosine intermediate in the catalytic mechanism.

Belongs to the 'phage' integrase family. XerD subfamily. As to quaternary structure, forms a cyclic heterotetrameric complex composed of two molecules of XerC and two molecules of XerD.

It is found in the cytoplasm. Site-specific tyrosine recombinase, which acts by catalyzing the cutting and rejoining of the recombining DNA molecules. The XerC-XerD complex is essential to convert dimers of the bacterial chromosome into monomers to permit their segregation at cell division. It also contributes to the segregational stability of plasmids. The chain is Tyrosine recombinase XerD from Pasteurella multocida (strain Pm70).